A 217-amino-acid polypeptide reads, in one-letter code: U2 snRNP component ist3 (217 aa).

Positions 31-109 (AYIYIGNLDF…RLVRVDHVAS (79 aa)) constitute an RRM domain. 2 disordered regions span residues 119–138 (PANL…STIN) and 154–217 (EVEQ…DLDG). Residues 128 to 138 (SGSSLSVSTIN) are compositionally biased toward polar residues. At Ser160 the chain carries Phosphoserine. Basic and acidic residues-rich tracts occupy residues 161-176 (PKDE…DYIH) and 185-198 (HESS…DSNR). Residues 199 to 217 (HSRHHRRHSRSRRHRDLDG) show a composition bias toward basic residues.

The protein belongs to the IST3 family. Belongs to the 40S cdc5-associated complex (or cwf complex), a spliceosome sub-complex reminiscent of a late-stage spliceosome composed of the U2, U5 and U6 snRNAs and at least brr2, cdc5, cwf2/prp3, cwf3/syf1, cwf4/syf3, cwf5/ecm2, spp42/cwf6, cwf7/spf27, cwf8, cwf9, cwf10, cwf11, cwf12, prp45/cwf13, cwf14, cwf15, cwf16, cwf17, cwf18, cwf19, cwf20, cwf21, cwf22, cwf23, cwf24, cwf25, cwf26, cyp7/cwf27, cwf28, cwf29/ist3, lea1, msl1, prp5/cwf1, prp10, prp12/sap130, prp17, prp22, sap61, sap62, sap114, sap145, slu7, smb1, smd1, smd3, smf1, smg1 and syf2.

It is found in the nucleus. Functionally, required for pre-mRNA splicing and spliceosome assembly. This Schizosaccharomyces pombe (strain 972 / ATCC 24843) (Fission yeast) protein is U2 snRNP component ist3 (cwf29).